A 154-amino-acid chain; its full sequence is Large-conductance mechanosensitive channel (154 aa).

2 helical membrane passes run 14-34 (VVDLAVGIVIGAAFGAIVNSL) and 86-106 (VFINALINFLILAMAIFFFVV).

The protein belongs to the MscL family. Homopentamer.

Its subcellular location is the cell membrane. Functionally, channel that opens in response to stretch forces in the membrane lipid bilayer. May participate in the regulation of osmotic pressure changes within the cell. This is Large-conductance mechanosensitive channel from Dehalococcoides mccartyi (strain CBDB1).